Consider the following 610-residue polypeptide: Butyryl-CoA dehydrogenase Swol_2052 (610 aa).

Glu-451 (proton acceptor) is an active-site residue.

The protein belongs to the acyl-CoA dehydrogenase family. FAD serves as cofactor.

It localises to the cytoplasm. It catalyses the reaction butanoyl-CoA + oxidized [electron-transfer flavoprotein] + H(+) = (2E)-butenoyl-CoA + reduced [electron-transfer flavoprotein]. The catalysed reaction is a short-chain 2,3-saturated fatty acyl-CoA + oxidized [electron-transfer flavoprotein] + H(+) = a short-chain (2E)-enoyl-CoA + reduced [electron-transfer flavoprotein]. Its pathway is lipid metabolism; butanoate metabolism. Functionally, involved in syntrophic growth of S.wolfei with butyrate, as part of the butyrate oxidation pathway. Catalyzes the oxidation of butanoyl-CoA to crotonyl-CoA. Probably passes the electrons released by this reaction on to electron-transfer flavoproteins (EtfAB) to finally generate hydrogen and/or formate. In Syntrophomonas wolfei subsp. wolfei (strain DSM 2245B / Goettingen), this protein is Butyryl-CoA dehydrogenase Swol_2052.